The primary structure comprises 325 residues: 2-oxoglutarate-dependent dioxygenase tropC (325 aa).

The Fe2OG dioxygenase domain maps to 185 to 287; the sequence is PSIPMRLLHY…RYSVAFFLNG (103 aa). Fe cation-binding residues include H210, D212, and H269. R278 is a binding site for 2-oxoglutarate.

This sequence belongs to the iron/ascorbate-dependent oxidoreductase family. The cofactor is Fe(2+).

It functions in the pathway secondary metabolite biosynthesis. 2-oxoglutarate-dependent dioxygenase; part of the gene cluster that mediates the biosynthesis of the tropolone class of fungal maleic anhydrides. The pathway begins with the synthesis of 3-methylorcinaldehyde by the non-reducing polyketide synthase (PKS) tropA. 3-methylorcinaldehyde is the substrate for the FAD-dependent monooxygenase tropB to yield a dearomatized hydroxycyclohexadione. The 2-oxoglutarate-dependent dioxygenase tropC then performs the oxidative ring expansion to provide the first tropolone metabolite stipitaldehyde. Trop D converts stipitaldehyde into stipitacetal which is in turn converted to stipitalide by the short-chain dehydrogenase/reductase tropE. The next steps involve tropF, tropG, tropH, tropI and tropJ to form successive tropolone maleic anhydrides including stipitaldehydic, stipitatonic and stipitatic acids. In Talaromyces stipitatus (strain ATCC 10500 / CBS 375.48 / QM 6759 / NRRL 1006) (Penicillium stipitatum), this protein is 2-oxoglutarate-dependent dioxygenase tropC.